Reading from the N-terminus, the 268-residue chain is 3-methyl-2-oxobutanoate hydroxymethyltransferase (268 aa).

Mg(2+) is bound by residues Asp-46 and Asp-85. Residues 46–47 (DS), Asp-85, and Lys-115 each bind 3-methyl-2-oxobutanoate. Glu-117 lines the Mg(2+) pocket. Glu-184 serves as the catalytic Proton acceptor.

Belongs to the PanB family. In terms of assembly, homodecamer; pentamer of dimers. Mg(2+) serves as cofactor.

It is found in the cytoplasm. It catalyses the reaction 3-methyl-2-oxobutanoate + (6R)-5,10-methylene-5,6,7,8-tetrahydrofolate + H2O = 2-dehydropantoate + (6S)-5,6,7,8-tetrahydrofolate. The protein operates within cofactor biosynthesis; (R)-pantothenate biosynthesis; (R)-pantoate from 3-methyl-2-oxobutanoate: step 1/2. Its function is as follows. Catalyzes the reversible reaction in which hydroxymethyl group from 5,10-methylenetetrahydrofolate is transferred onto alpha-ketoisovalerate to form ketopantoate. The protein is 3-methyl-2-oxobutanoate hydroxymethyltransferase of Magnetococcus marinus (strain ATCC BAA-1437 / JCM 17883 / MC-1).